The following is a 460-amino-acid chain: Elongation factor 1-alpha (460 aa).

Glycine 2 is modified (n,N,N-trimethylglycine). The residue at position 3 (lysine 3) is an N6,N6-dimethyllysine; alternate. Lysine 3 is subject to N6-methyllysine; alternate. The tr-type G domain occupies 5–240 (KLHVNVVVIG…DAIEPPVRPS (236 aa)). The segment at 14 to 21 (GHVDSGKS) is G1. Residue 14-21 (GHVDSGKS) coordinates GTP. Position 30 is an N6-methyllysine (lysine 30). Residues 70–74 (GITID) are G2. Lysine 79 carries the post-translational modification N6,N6,N6-trimethyllysine. The segment at 91–94 (DAPG) is G3. GTP-binding positions include 91-95 (DAPGH) and 153-156 (NKMD). Residues 153 to 156 (NKMD) are G4. The tract at residues 192 to 194 (SGW) is G5. Lysine 316 is modified (N6,N6-dimethyllysine; alternate). The residue at position 316 (lysine 316) is an N6-methyllysine; alternate. Lysine 390 is modified (N6-methyllysine).

It belongs to the TRAFAC class translation factor GTPase superfamily. Classic translation factor GTPase family. EF-Tu/EF-1A subfamily.

The protein resides in the cytoplasm. Its function is as follows. This protein promotes the GTP-dependent binding of aminoacyl-tRNA to the A-site of ribosomes during protein biosynthesis. This chain is Elongation factor 1-alpha (TEF1), found in Schizophyllum commune (Split gill fungus).